The sequence spans 837 residues: Thioredoxin domain-containing protein 3 homolog (837 aa).

Residues 6–115 (EQIQLQKEIL…LKNVERELKQ (110 aa)) form the Thioredoxin domain. C39 and C42 are oxidised to a cystine. NDK stretches follow at residues 201–345 (KEVT…SVPI), 355–491 (IEKT…FPKQ), and 493–629 (TLAV…EVLP). Residues 633–837 (VKDSVASISM…EEKTEEQTAS (205 aa)) form a disordered region. Residues 638 to 647 (ASISMEQSQV) are compositionally biased toward polar residues. Residues 652–670 (EEGGEEQTEQPAGEGEEQQ) are compositionally biased toward acidic residues. Low complexity-rich tracts occupy residues 671–707 (AEQP…PPAE), 718–752 (QQTQ…AEQT), and 766–787 (APAT…QQTQ). Positions 805–819 (AGGGEEAVATEGGGE) are enriched in gly residues. Over residues 820-837 (GDAKPEGGEEKTEEQTAS) the composition is skewed to basic and acidic residues.

It in the C-terminal section; belongs to the NDK family. As to quaternary structure, monomer. As to expression, testis-specific. In sperm, it is a component of the arm dynein of sperm axoneme.

In terms of biological role, probably required during the final stages of sperm tail maturation in the testis and/or epididymis, where extensive disulfide bonding of fibrous sheath (FS) proteins occurs. In vitro, it has neither nucleoside diphosphate kinase (NDPK) activity nor reducing activity on disulfide bonds. Exhibits a 3'-5' exonuclease activity with a preference for single-stranded DNA, suggesting roles in DNA proofreading and repair. In Heliocidaris crassispina (Sea urchin), this protein is Thioredoxin domain-containing protein 3 homolog (NME8).